Consider the following 238-residue polypeptide: Cysteine-rich venom protein (238 aa).

The N-terminal stretch at 1 to 19 is a signal peptide; that stretch reads MIAFIVLLSLAAVLQQSSG. Residues 38-164 enclose the SCP domain; that stretch reads VDKHNALRRS…STKYLYVCQY (127 aa). 8 disulfide bridges follow: Cys75/Cys153, Cys92/Cys165, Cys148/Cys162, Cys184/Cys191, Cys187/Cys196, Cys200/Cys233, Cys209/Cys227, and Cys218/Cys231. The region spanning 200-233 is the ShKT domain; that stretch reads CKYEDAFTNCKALAKKTKCKTEWIKSKCPATCFC.

This sequence belongs to the CRISP family. In terms of tissue distribution, expressed by the venom gland.

The protein resides in the secreted. Its function is as follows. Blocks contraction of smooth muscle elicited by high potassium-induced depolarization, but does not block caffeine-stimulated contraction. May target voltage-gated calcium channels on smooth muscle. This is Cysteine-rich venom protein from Austrelaps superbus (Lowland copperhead snake).